A 135-amino-acid polypeptide reads, in one-letter code: Large ribosomal subunit protein uL16c (135 aa).

It belongs to the universal ribosomal protein uL16 family. Part of the 50S ribosomal subunit.

The protein localises to the plastid. Its subcellular location is the chloroplast. The sequence is that of Large ribosomal subunit protein uL16c from Lactuca sativa (Garden lettuce).